The following is a 53-amino-acid chain: Large ribosomal subunit protein eL40 (53 aa).

This sequence belongs to the eukaryotic ribosomal protein eL40 family.

This chain is Large ribosomal subunit protein eL40, found in Pyrobaculum neutrophilum (strain DSM 2338 / JCM 9278 / NBRC 100436 / V24Sta) (Thermoproteus neutrophilus).